A 477-amino-acid polypeptide reads, in one-letter code: Bifunctional protein HldE (477 aa).

The ribokinase stretch occupies residues 1 to 318; that stretch reads MKVTLPEFER…ENAVRGRADT (318 aa). 195 to 198 contributes to the ATP binding site; that stretch reads NLSE. D264 is a catalytic residue. The segment at 344–477 is cytidylyltransferase; it reads MTNGVFDILH…IKKIQKDSDK (134 aa).

In the N-terminal section; belongs to the carbohydrate kinase PfkB family. The protein in the C-terminal section; belongs to the cytidylyltransferase family. Homodimer.

The catalysed reaction is D-glycero-beta-D-manno-heptose 7-phosphate + ATP = D-glycero-beta-D-manno-heptose 1,7-bisphosphate + ADP + H(+). The enzyme catalyses D-glycero-beta-D-manno-heptose 1-phosphate + ATP + H(+) = ADP-D-glycero-beta-D-manno-heptose + diphosphate. It functions in the pathway nucleotide-sugar biosynthesis; ADP-L-glycero-beta-D-manno-heptose biosynthesis; ADP-L-glycero-beta-D-manno-heptose from D-glycero-beta-D-manno-heptose 7-phosphate: step 1/4. Its pathway is nucleotide-sugar biosynthesis; ADP-L-glycero-beta-D-manno-heptose biosynthesis; ADP-L-glycero-beta-D-manno-heptose from D-glycero-beta-D-manno-heptose 7-phosphate: step 3/4. In terms of biological role, catalyzes the phosphorylation of D-glycero-D-manno-heptose 7-phosphate at the C-1 position to selectively form D-glycero-beta-D-manno-heptose-1,7-bisphosphate. Functionally, catalyzes the ADP transfer from ATP to D-glycero-beta-D-manno-heptose 1-phosphate, yielding ADP-D-glycero-beta-D-manno-heptose. The polypeptide is Bifunctional protein HldE (Citrobacter koseri (strain ATCC BAA-895 / CDC 4225-83 / SGSC4696)).